The following is a 160-amino-acid chain: Cyclic pyranopterin monophosphate synthase (160 aa).

Substrate is bound by residues 77–79 (MCH) and 114–115 (ME). Aspartate 129 is a catalytic residue.

Belongs to the MoaC family. In terms of assembly, homohexamer; trimer of dimers.

The catalysed reaction is (8S)-3',8-cyclo-7,8-dihydroguanosine 5'-triphosphate = cyclic pyranopterin phosphate + diphosphate. Its pathway is cofactor biosynthesis; molybdopterin biosynthesis. Functionally, catalyzes the conversion of (8S)-3',8-cyclo-7,8-dihydroguanosine 5'-triphosphate to cyclic pyranopterin monophosphate (cPMP). The chain is Cyclic pyranopterin monophosphate synthase from Listeria monocytogenes serotype 4b (strain F2365).